The following is a 154-amino-acid chain: Spermatogenesis-associated protein 19, mitochondrial (154 aa).

Residues 1–24 constitute a mitochondrion transit peptide; sequence MIITTWIVYILARKGAGLPFPPKV. Phosphoserine occurs at positions 26 and 116.

It is found in the mitochondrion outer membrane. Its subcellular location is the mitochondrion. It localises to the cell projection. The protein resides in the cilium. The protein localises to the flagellum. Its function is as follows. Essential for sperm motility and male fertility. Plays an important role in sperm motility by regulating the organization and function of the mitochondria and is also required for correct sperm midpiece assembly. The protein is Spermatogenesis-associated protein 19, mitochondrial (SPATA19) of Bos taurus (Bovine).